The following is a 151-amino-acid chain: Transcriptional repressor NrdR (151 aa).

A zinc finger spans residues 3–34 (CPKCGSLNDKVLETRQSKEGVVIKRRRECLNC). One can recognise an ATP-cone domain in the interval 49 to 139 (IEVIKKNNTV…VFDGFEDIKD (91 aa)).

Belongs to the NrdR family. Zn(2+) serves as cofactor.

Functionally, negatively regulates transcription of bacterial ribonucleotide reductase nrd genes and operons by binding to NrdR-boxes. This chain is Transcriptional repressor NrdR, found in Sulfurihydrogenibium sp. (strain YO3AOP1).